Here is a 303-residue protein sequence, read N- to C-terminus: Exosome complex component RRP4 homolog (303 aa).

The KH domain occupies G175–P213.

Belongs to the RRP4 family. In terms of assembly, component of the RNA exosome complex. In terms of tissue distribution, ubiquitously expressed.

It localises to the nucleus. The protein resides in the nucleolus. It is found in the nucleoplasm. Non-catalytic component of the RNA exosome complex which has 3'-&gt;5' exoribonuclease activity and participates in a multitude of cellular RNA processing and degradation events. Involved in regulation of antisense ribosomal siRNA production. Involved in response to cold-warm shock. This is Exosome complex component RRP4 homolog from Caenorhabditis elegans.